Here is a 179-residue protein sequence, read N- to C-terminus: Putative manganese efflux pump MntP (179 aa).

6 helical membrane passes run 4–24 (VLILAFALSMDAFAVSIGLGI), 39–59 (LFFGIFQALMPFLGFLGGIGL), 69–89 (IVAFILLLAIGGKMIYEAFNE), 102–122 (ILLTLAIATSLDAMAAGYSLH), 128–148 (IYLSLFVIGFTTFIISYIGVY), and 159–179 (SKAEILGGVVLILIGLKILLF).

Belongs to the MntP (TC 9.B.29) family.

It localises to the cell inner membrane. Functionally, probably functions as a manganese efflux pump. This is Putative manganese efflux pump MntP from Aliarcobacter butzleri (strain RM4018) (Arcobacter butzleri).